The sequence spans 372 residues: tRNA-specific 2-thiouridylase MnmA (372 aa).

ATP is bound by residues 7 to 14 (GLSGGVDS) and methionine 33. Residues 104-106 (NPD) are interaction with target base in tRNA. Cysteine 109 serves as the catalytic Nucleophile. A disulfide bridge links cysteine 109 with cysteine 202. Glycine 134 contacts ATP. The interval 152-154 (KDQ) is interaction with tRNA. Cysteine 202 serves as the catalytic Cysteine persulfide intermediate. An interaction with tRNA region spans residues 310-311 (RY).

This sequence belongs to the MnmA/TRMU family.

The protein resides in the cytoplasm. The catalysed reaction is S-sulfanyl-L-cysteinyl-[protein] + uridine(34) in tRNA + AH2 + ATP = 2-thiouridine(34) in tRNA + L-cysteinyl-[protein] + A + AMP + diphosphate + H(+). Its function is as follows. Catalyzes the 2-thiolation of uridine at the wobble position (U34) of tRNA, leading to the formation of s(2)U34. The sequence is that of tRNA-specific 2-thiouridylase MnmA from Mesomycoplasma hyopneumoniae (strain 232) (Mycoplasma hyopneumoniae).